A 412-amino-acid polypeptide reads, in one-letter code: Interferon-inducible GTPase 5 (412 aa).

The 184-residue stretch at 51–234 folds into the IRG-type G domain; sequence TRLEVGVTGE…PMLVTTWEHD (184 aa). Residues 60–67, 85–89, and 215–217 contribute to the GTP site; these read ESGAGKSS, TGVVE, and SNL. Phosphoserine occurs at positions 246 and 303.

It belongs to the TRAFAC class dynamin-like GTPase superfamily. IRG family. Interacts with PLIN2/ADRP and COX4I1/COXIV. Expressed in spermatozoa tails from the testis and epididymis, where it may be a component of the fibrous sheath (at protein level).

It is found in the cell projection. The protein resides in the cilium. It localises to the flagellum. Its subcellular location is the lipid droplet. The catalysed reaction is GTP + H2O = GDP + phosphate + H(+). In terms of biological role, required for sperm motility and therefore male fertility, via positive regulation of spermatozoa fibrous sheath formation. In Mus musculus (Mouse), this protein is Interferon-inducible GTPase 5.